We begin with the raw amino-acid sequence, 95 residues long: Small ribosomal subunit protein bS6 (95 aa).

The protein belongs to the bacterial ribosomal protein bS6 family.

Functionally, binds together with bS18 to 16S ribosomal RNA. This is Small ribosomal subunit protein bS6 from Nocardia farcinica (strain IFM 10152).